The primary structure comprises 49 residues: Large ribosomal subunit protein bL33 (49 aa).

Belongs to the bacterial ribosomal protein bL33 family.

The protein is Large ribosomal subunit protein bL33 of Streptococcus pyogenes serotype M18 (strain MGAS8232).